Reading from the N-terminus, the 426-residue chain is Histidine--tRNA ligase (426 aa).

Belongs to the class-II aminoacyl-tRNA synthetase family. Homodimer.

Its subcellular location is the cytoplasm. The catalysed reaction is tRNA(His) + L-histidine + ATP = L-histidyl-tRNA(His) + AMP + diphosphate + H(+). The sequence is that of Histidine--tRNA ligase from Streptococcus equi subsp. zooepidemicus (strain H70).